The sequence spans 123 residues: Small ribosomal subunit protein uS12 (123 aa).

Aspartate 89 carries the 3-methylthioaspartic acid modification.

Belongs to the universal ribosomal protein uS12 family. Part of the 30S ribosomal subunit. Contacts proteins S8 and S17. May interact with IF1 in the 30S initiation complex.

With S4 and S5 plays an important role in translational accuracy. In terms of biological role, interacts with and stabilizes bases of the 16S rRNA that are involved in tRNA selection in the A site and with the mRNA backbone. Located at the interface of the 30S and 50S subunits, it traverses the body of the 30S subunit contacting proteins on the other side and probably holding the rRNA structure together. The combined cluster of proteins S8, S12 and S17 appears to hold together the shoulder and platform of the 30S subunit. The polypeptide is Small ribosomal subunit protein uS12 (Myxococcus xanthus).